A 260-amino-acid chain; its full sequence is 3-alpha-(or 20-beta)-hydroxysteroid dehydrogenase (260 aa).

NAD(+) is bound by residues Arg-17, Met-19, Asp-38, Asp-61, Val-62, Asn-88, Tyr-153, Lys-157, Val-186, Thr-188, and Thr-191. Tyr-153 serves as the catalytic Proton acceptor.

This sequence belongs to the short-chain dehydrogenases/reductases (SDR) family. As to quaternary structure, homotetramer.

It carries out the reaction androstan-3alpha,17beta-diol + NAD(+) = 17beta-hydroxyandrostanone + NADH + H(+). Its pathway is lipid metabolism; steroid degradation. Its function is as follows. Probably involved in steroid metabolism. The polypeptide is 3-alpha-(or 20-beta)-hydroxysteroid dehydrogenase (fabG3) (Mycobacterium tuberculosis (strain CDC 1551 / Oshkosh)).